We begin with the raw amino-acid sequence, 352 residues long: Ion-translocating oxidoreductase complex subunit D (352 aa).

A run of 5 helical transmembrane segments spans residues 20–40, 42–62, 78–109, 123–143, and 148–168; these read IMLL…WFFG, GTLV…ALVL, ALLT…VIIA, PAMI…TSWL, and IAVN…GHTA. T187 is modified (FMN phosphoryl threonine). 5 helical membrane-spanning segments follow: residues 214 to 234, 242 to 262, 267 to 287, 301 to 321, and 322 to 342; these read ILAG…GVWL, WHIP…GWLF, LAAP…FFIL, LIFG…GGYP, and DGVA…DYYT.

Belongs to the NqrB/RnfD family. The complex is composed of six subunits: RsxA, RsxB, RsxC, RsxD, RsxE and RsxG. Requires FMN as cofactor.

The protein resides in the cell inner membrane. In terms of biological role, part of a membrane-bound complex that couples electron transfer with translocation of ions across the membrane. Required to maintain the reduced state of SoxR. This is Ion-translocating oxidoreductase complex subunit D from Escherichia coli O139:H28 (strain E24377A / ETEC).